A 311-amino-acid polypeptide reads, in one-letter code: Probable dihydroorotate dehydrogenase A (fumarate) (311 aa).

Residues Ser-20 and 44–45 each bind FMN; that span reads KT. Residues Lys-44, 68 to 72, and Asn-127 contribute to the substrate site; that span reads NSMGL. Asn-127 provides a ligand contact to FMN. Residue Cys-130 is the Nucleophile of the active site. Residues Lys-164 and Ile-192 each coordinate FMN. 193 to 194 provides a ligand contact to substrate; the sequence is NS. Residues Gly-221, 249–250, and 271–272 contribute to the FMN site; these read GG and GT.

Belongs to the dihydroorotate dehydrogenase family. Type 1 subfamily. As to quaternary structure, homodimer. Requires FMN as cofactor.

It is found in the cytoplasm. It carries out the reaction (S)-dihydroorotate + fumarate = orotate + succinate. Its pathway is pyrimidine metabolism; UMP biosynthesis via de novo pathway. Its function is as follows. Catalyzes the conversion of dihydroorotate to orotate with fumarate as the electron acceptor. This is Probable dihydroorotate dehydrogenase A (fumarate) (pyrDA) from Enterococcus faecalis (strain ATCC 700802 / V583).